A 320-amino-acid chain; its full sequence is Ferrochelatase (320 aa).

Histidine 194 and glutamate 275 together coordinate Fe cation.

Belongs to the ferrochelatase family. Monomer.

The protein localises to the cytoplasm. The catalysed reaction is heme b + 2 H(+) = protoporphyrin IX + Fe(2+). The protein operates within porphyrin-containing compound metabolism; protoheme biosynthesis; protoheme from protoporphyrin-IX: step 1/1. Its function is as follows. Catalyzes the ferrous insertion into protoporphyrin IX. The sequence is that of Ferrochelatase from Salmonella paratyphi A (strain ATCC 9150 / SARB42).